Consider the following 176-residue polypeptide: Superoxide oxidase CybB (176 aa).

The Cytoplasmic portion of the chain corresponds to 1-7; that stretch reads MENKYSR. Residues 8 to 29 form a helical membrane-spanning segment; the sequence is LQISIHWLVFLLVIAAYCAMEF. Residue histidine 13 participates in heme b binding. The Periplasmic segment spans residues 30–39; it reads RGFFPRSDRP. Residues 40–64 traverse the membrane as a helical segment; that stretch reads LINMIHVSCGISILVLMVVRLLLRL. Residue histidine 45 coordinates heme b. Topologically, residues 65–77 are cytoplasmic; it reads KYPTPPIIPKPKP. Residues 78 to 103 traverse the membrane as a helical segment; it reads MMTGLAHLGHLVIYLLFIALPVIGLV. Residues 104–135 are Periplasmic-facing; sequence MMYNRGNPWFAFGLTMPYASEANFERVDSLKS. Residues 136-158 form a helical membrane-spanning segment; that stretch reads WHETLANLGYFVIGLHAAAALAH. Histidine 137 and histidine 151 together coordinate heme b. Residues 159–176 lie on the Cytoplasmic side of the membrane; that stretch reads HYFWKDNTLLRMMPRKRS.

Belongs to the cytochrome b561 family. Monomer. Requires heme b as cofactor.

It localises to the cell inner membrane. It carries out the reaction a ubiquinol + 2 O2 = 2 superoxide + a ubiquinone + 2 H(+). The catalysed reaction is a menaquinol + 2 O2 = 2 superoxide + a menaquinone + 2 H(+). Its activity is regulated as follows. Quinone binding to the enzyme accelerates the reaction with superoxide. Functionally, B-type di-heme cytochrome. Catalyzes the oxidation of superoxide to molecular oxygen and transfers the extracted electrons to ubiquinone through the two hemes. Can also use menaquinone. The enzyme may be responsible for the detoxification of the superoxide anion produced in the membrane or at its surface. However, it can also efficiently catalyze the formation of superoxide from ubiquinol under physiological conditions. This chain is Superoxide oxidase CybB, found in Escherichia coli (strain K12).